The sequence spans 618 residues: NAD(P)H-quinone oxidoreductase subunit 5, organellar chromatophore 2 (618 aa).

The next 17 membrane-spanning stretches (helical) occupy residues 16–36 (LIPI…TGWI), 43–63 (TPAY…SLAL), 99–119 (LAAL…ALGY), 129–149 (FFAL…SDSL), 152–172 (SYFL…FWYA), 190–210 (GDVM…GMEF), 220–240 (NTLT…GPIG), 267–287 (SVVV…LHHS), 291–311 (IAVL…VSIA), 318–335 (TLSY…IAIA), 348–368 (AHAI…AVSN), 390–410 (LIAG…CFGL), 419–438 (APWF…LNLT), 461–481 (WQMA…PWMM), 495–515 (AITG…GAIV), 553–573 (IVSG…NGFV), and 597–617 (SYIL…SWLV).

The protein belongs to the complex I subunit 5 family. NDH is composed of at least 16 different subunits, 5 of which are encoded in the nucleus.

It localises to the plastid. Its subcellular location is the organellar chromatophore thylakoid membrane. It catalyses the reaction a plastoquinone + NADH + (n+1) H(+)(in) = a plastoquinol + NAD(+) + n H(+)(out). It carries out the reaction a plastoquinone + NADPH + (n+1) H(+)(in) = a plastoquinol + NADP(+) + n H(+)(out). NDH shuttles electrons from NAD(P)H:plastoquinone, via FMN and iron-sulfur (Fe-S) centers, to quinones in the photosynthetic chain and possibly in a chloroplast respiratory chain. The immediate electron acceptor for the enzyme in this species is believed to be plastoquinone. Couples the redox reaction to proton translocation, and thus conserves the redox energy in a proton gradient. The sequence is that of NAD(P)H-quinone oxidoreductase subunit 5, organellar chromatophore 2 (ndhF2) from Paulinella chromatophora.